Here is a 62-residue protein sequence, read N- to C-terminus: UPF0434 protein Smed_3047 (62 aa).

It belongs to the UPF0434 family.

The chain is UPF0434 protein Smed_3047 from Sinorhizobium medicae (strain WSM419) (Ensifer medicae).